A 311-amino-acid polypeptide reads, in one-letter code: 2-dehydro-3-deoxygluconokinase (311 aa).

Residues 34-35 (GS), 106-108 (YYR), and R166 contribute to the substrate site. ATP-binding positions include 164–166 (NIR), 224–229 (KLGPKG), 253–256 (GAGD), and S283. Substrate is bound by residues G253 and D256. D256 acts as the Proton acceptor in catalysis. D292 provides a ligand contact to substrate.

Belongs to the carbohydrate kinase PfkB family. As to quaternary structure, homotetramer. It depends on a divalent metal cation as a cofactor.

The catalysed reaction is 2-dehydro-3-deoxy-D-gluconate + ATP = 2-dehydro-3-deoxy-6-phospho-D-gluconate + ADP + H(+). The protein operates within carbohydrate acid metabolism; 2-dehydro-3-deoxy-D-gluconate degradation; D-glyceraldehyde 3-phosphate and pyruvate from 2-dehydro-3-deoxy-D-gluconate: step 1/2. Its function is as follows. Involved in the degradation of glucose via the semi-phosphorylative Entner-Doudoroff pathway. Catalyzes the phosphorylation of 2-keto-3-deoxygluconate (KDG) to produce 2-keto-3-deoxy-6-phosphogluconate (KDPG). Can also use GTP, but not ADP or AMP, as a phosphoryl donor and 2-keto-D-gluconate (KG) as a phosphoryl acceptor. The protein is 2-dehydro-3-deoxygluconokinase of Sulfurisphaera tokodaii (strain DSM 16993 / JCM 10545 / NBRC 100140 / 7) (Sulfolobus tokodaii).